Consider the following 361-residue polypeptide: Putative agmatine deiminase (361 aa).

The Amidino-cysteine intermediate role is filled by cysteine 354.

This sequence belongs to the agmatine deiminase family.

The enzyme catalyses agmatine + H2O = N-carbamoylputrescine + NH4(+). In Streptococcus pneumoniae (strain Taiwan19F-14), this protein is Putative agmatine deiminase.